A 643-amino-acid polypeptide reads, in one-letter code: 1-deoxy-D-xylulose-5-phosphate synthase (643 aa).

Thiamine diphosphate contacts are provided by residues His-78 and 119-121 (AHS). Asp-150 lines the Mg(2+) pocket. Thiamine diphosphate contacts are provided by residues 151–152 (GS), Asn-179, Tyr-288, and Glu-370. Mg(2+) is bound at residue Asn-179.

This sequence belongs to the transketolase family. DXPS subfamily. In terms of assembly, homodimer. Mg(2+) serves as cofactor. It depends on thiamine diphosphate as a cofactor.

The enzyme catalyses D-glyceraldehyde 3-phosphate + pyruvate + H(+) = 1-deoxy-D-xylulose 5-phosphate + CO2. Its pathway is metabolic intermediate biosynthesis; 1-deoxy-D-xylulose 5-phosphate biosynthesis; 1-deoxy-D-xylulose 5-phosphate from D-glyceraldehyde 3-phosphate and pyruvate: step 1/1. Functionally, catalyzes the acyloin condensation reaction between C atoms 2 and 3 of pyruvate and glyceraldehyde 3-phosphate to yield 1-deoxy-D-xylulose-5-phosphate (DXP). This Brucella melitensis biotype 2 (strain ATCC 23457) protein is 1-deoxy-D-xylulose-5-phosphate synthase.